We begin with the raw amino-acid sequence, 295 residues long: Ethanolamine ammonia-lyase small subunit (295 aa).

Adenosylcob(III)alamin-binding residues include V207, E228, and C258.

This sequence belongs to the EutC family. In terms of assembly, the basic unit is a heterodimer which dimerizes to form tetramers. The heterotetramers trimerize; 6 large subunits form a core ring with 6 small subunits projecting outwards. Adenosylcob(III)alamin serves as cofactor.

The protein resides in the bacterial microcompartment. The enzyme catalyses ethanolamine = acetaldehyde + NH4(+). It functions in the pathway amine and polyamine degradation; ethanolamine degradation. Functionally, catalyzes the deamination of various vicinal amino-alcohols to oxo compounds. Allows this organism to utilize ethanolamine as the sole source of nitrogen and carbon in the presence of external vitamin B12. The protein is Ethanolamine ammonia-lyase small subunit of Escherichia coli O139:H28 (strain E24377A / ETEC).